A 112-amino-acid polypeptide reads, in one-letter code: Protein F-112 (112 aa).

Essential for virus function. This Saccharolobus solfataricus (Sulfolobus solfataricus) protein is Protein F-112.